Reading from the N-terminus, the 45-residue chain is Putative purine permease 9 (45 aa).

As to expression, not detected in seedlings, leaves, embryos or root and shoot meristems.

This Arabidopsis thaliana (Mouse-ear cress) protein is Putative purine permease 9.